The chain runs to 428 residues: 3-phosphoshikimate 1-carboxyvinyltransferase (428 aa).

Lys20, Ser21, and Arg25 together coordinate 3-phosphoshikimate. Residue Lys20 coordinates phosphoenolpyruvate. Positions 93 and 122 each coordinate phosphoenolpyruvate. The 3-phosphoshikimate site is built by Ser167, Gln169, Asp317, and Lys344. Gln169 contacts phosphoenolpyruvate. Asp317 functions as the Proton acceptor in the catalytic mechanism. 2 residues coordinate phosphoenolpyruvate: Arg348 and Arg390.

Belongs to the EPSP synthase family. As to quaternary structure, monomer.

It localises to the cytoplasm. It catalyses the reaction 3-phosphoshikimate + phosphoenolpyruvate = 5-O-(1-carboxyvinyl)-3-phosphoshikimate + phosphate. Its pathway is metabolic intermediate biosynthesis; chorismate biosynthesis; chorismate from D-erythrose 4-phosphate and phosphoenolpyruvate: step 6/7. Catalyzes the transfer of the enolpyruvyl moiety of phosphoenolpyruvate (PEP) to the 5-hydroxyl of shikimate-3-phosphate (S3P) to produce enolpyruvyl shikimate-3-phosphate and inorganic phosphate. This is 3-phosphoshikimate 1-carboxyvinyltransferase from Leptospira biflexa serovar Patoc (strain Patoc 1 / ATCC 23582 / Paris).